The chain runs to 138 residues: Large ribosomal subunit protein mL54 (138 aa).

The transit peptide at Met1 to Ala14 directs the protein to the mitochondrion.

It belongs to the mitochondrion-specific ribosomal protein mL54 family. As to quaternary structure, component of the mitochondrial large ribosomal subunit (mt-LSU). Mature mammalian 55S mitochondrial ribosomes consist of a small (28S) and a large (39S) subunit. The 28S small subunit contains a 12S ribosomal RNA (12S mt-rRNA) and 30 different proteins. The 39S large subunit contains a 16S rRNA (16S mt-rRNA), a copy of mitochondrial valine transfer RNA (mt-tRNA(Val)), which plays an integral structural role, and 52 different proteins.

Its subcellular location is the mitochondrion. This Homo sapiens (Human) protein is Large ribosomal subunit protein mL54 (MRPL54).